A 138-amino-acid polypeptide reads, in one-letter code: Ribulose bisphosphate carboxylase small subunit (138 aa).

Belongs to the RuBisCO small chain family. As to quaternary structure, heterohexadecamer of 8 large and 8 small subunits.

The protein resides in the plastid. The protein localises to the chloroplast. Its function is as follows. RuBisCO catalyzes two reactions: the carboxylation of D-ribulose 1,5-bisphosphate, the primary event in carbon dioxide fixation, as well as the oxidative fragmentation of the pentose substrate in the photorespiration process. Both reactions occur simultaneously and in competition at the same active site. Although the small subunit is not catalytic it is essential for maximal activity. The sequence is that of Ribulose bisphosphate carboxylase small subunit from Cyanidioschyzon merolae (strain NIES-3377 / 10D) (Unicellular red alga).